The following is a 437-amino-acid chain: Probable indole-3-pyruvate monooxygenase YUCCA3 (437 aa).

Residue 41 to 46 (GAGPSG) coordinates FAD. 212-217 (GCGNSG) is an NADP(+) binding site.

Belongs to the FMO family. FAD serves as cofactor.

The enzyme catalyses indole-3-pyruvate + NADPH + O2 + H(+) = (indol-3-yl)acetate + CO2 + NADP(+) + H2O. The protein operates within plant hormone metabolism; auxin biosynthesis. Its function is as follows. Involved in auxin biosynthesis. Belongs to the set of redundant YUCCA genes probably responsible for auxin biosynthesis in roots. The polypeptide is Probable indole-3-pyruvate monooxygenase YUCCA3 (YUC3) (Arabidopsis thaliana (Mouse-ear cress)).